Reading from the N-terminus, the 608-residue chain is Protein FAM151A (608 aa).

A helical transmembrane segment spans residues 14–34; sequence WILAGSVTVTLVLAISLILGL. Positions 586–596 are enriched in polar residues; it reads VSSNRPSSRIG. The interval 586 to 608 is disordered; sequence VSSNRPSSRIGPSSVEGFPGESR.

This sequence belongs to the menorin family.

It is found in the membrane. This Mus musculus (Mouse) protein is Protein FAM151A (Fam151a).